We begin with the raw amino-acid sequence, 75 residues long: Small ribosomal subunit protein bS18 (75 aa).

It belongs to the bacterial ribosomal protein bS18 family. In terms of assembly, part of the 30S ribosomal subunit. Forms a tight heterodimer with protein bS6.

Its function is as follows. Binds as a heterodimer with protein bS6 to the central domain of the 16S rRNA, where it helps stabilize the platform of the 30S subunit. The sequence is that of Small ribosomal subunit protein bS18 from Histophilus somni (strain 129Pt) (Haemophilus somnus).